A 142-amino-acid polypeptide reads, in one-letter code: U1 small nuclear ribonucleoprotein C (142 aa).

Residues 4 to 36 form a Matrin-type zinc finger; the sequence is YYCDYCDTFLTHDSPSVRKTHNGGRKHKDNVRM.

It belongs to the U1 small nuclear ribonucleoprotein C family. U1 snRNP is composed of the 7 core Sm proteins B/B', D1, D2, D3, E, F and G that assemble in a heptameric protein ring on the Sm site of the small nuclear RNA to form the core snRNP, and at least 3 U1 snRNP-specific proteins U1-70K, U1-A and U1-C. U1-C interacts with U1 snRNA and the 5' splice-site region of the pre-mRNA.

It is found in the nucleus. Component of the spliceosomal U1 snRNP, which is essential for recognition of the pre-mRNA 5' splice-site and the subsequent assembly of the spliceosome. U1-C is directly involved in initial 5' splice-site recognition for both constitutive and regulated alternative splicing. The interaction with the 5' splice-site seems to precede base-pairing between the pre-mRNA and the U1 snRNA. Stimulates commitment or early (E) complex formation by stabilizing the base pairing of the 5' end of the U1 snRNA and the 5' splice-site region. The sequence is that of U1 small nuclear ribonucleoprotein C from Caenorhabditis briggsae.